A 31-amino-acid polypeptide reads, in one-letter code: Phospholipase A2 homolog P-elapitoxin-Aa1a beta chain (31 aa).

It belongs to the phospholipase A2 family. Group I subfamily. Heterotrimer of alpha, beta and gamma chains, each related to PLA2. Expressed by the venom gland.

It is found in the secreted. In terms of biological role, heterotrimer: Snake venom phospholipase A2 (PLA2) that has presynaptic neurotoxicity. Inhibits nerve-evoked twitch contractions but not responses to cholinergic agonists acetylcholine and carbachol and to depolarizing agonist KCl. Causes a fade in tetanic contractions. Displays a triphasic mode of action with depression, enhancement and blockade of neurotransmission. Does not display myotoxic activity such as changes in baseline muscle tension or inhibition of directly stimulated muscle twitches. All subunits are necessary for maximum toxicity. Monomer: The beta chain has no enzymatic activity and is not toxic by itself. The polypeptide is Phospholipase A2 homolog P-elapitoxin-Aa1a beta chain (Acanthophis antarcticus (Common death adder)).